The chain runs to 215 residues: MLQVYLVRHGETQWNAERRIQGQSDSPLTAKGEQQAMQVGERARSLGITHIISSDLGRTKRTAEIIAQACGCDITFDFRLRELDMGVLEKRQIDSLTEEEEGWRRQLVNGTQDGRIPGGESMQELSDRVHAALASCLELPQGSRPLLVSHGIALGCLVSTILGLPAWAERRLRLRNCSISRIDYQESQWLASGWVVETAGDVSHLDTPALDELQR.

Substrate is bound by residues 8–15, 21–22, Arg58, Lys60, 82–85, 104–105, and 151–152; these read RHGETQWN, QG, ELDM, RR, and GI. Catalysis depends on His9, which acts as the Tele-phosphohistidine intermediate. Glu82 serves as the catalytic Proton donor/acceptor.

This sequence belongs to the phosphoglycerate mutase family. GpmB subfamily.

The catalysed reaction is (2R)-2-phosphoglycerate = (2R)-3-phosphoglycerate. The protein operates within carbohydrate degradation; glycolysis; pyruvate from D-glyceraldehyde 3-phosphate: step 3/5. The protein is Probable phosphoglycerate mutase GpmB of Salmonella typhi.